Reading from the N-terminus, the 964-residue chain is Phosphoenolpyruvate carboxylase (964 aa).

Serine 11 is subject to Phosphoserine. Active-site residues include histidine 172 and lysine 600.

Belongs to the PEPCase type 1 family. Homotetramer. Mg(2+) serves as cofactor.

The protein localises to the cytoplasm. It carries out the reaction oxaloacetate + phosphate = phosphoenolpyruvate + hydrogencarbonate. The protein operates within photosynthesis; C4 acid pathway. By light-reversible phosphorylation. Through the carboxylation of phosphoenolpyruvate (PEP) it forms oxaloacetate, a four-carbon dicarboxylic acid source for the tricarboxylic acid cycle. The polypeptide is Phosphoenolpyruvate carboxylase (Amaranthus hypochondriacus (Prince-of-Wales feather)).